We begin with the raw amino-acid sequence, 889 residues long: Cytoplasmic aconitate hydratase (889 aa).

Residues glutamine 86 and 205-207 (DSH) contribute to the substrate site. 3 residues coordinate [4Fe-4S] cluster: cysteine 437, cysteine 503, and cysteine 506. Substrate contacts are provided by arginine 536 and arginine 541. Residue threonine 628 is modified to Phosphothreonine. Substrate contacts are provided by residues arginine 699 and 779–780 (SR).

It belongs to the aconitase/IPM isomerase family. As to quaternary structure, interacts (when associated with the 4Fe-4S) with FBXL5. Interacts with frataxin(81-210). Requires [4Fe-4S] cluster as cofactor.

It is found in the cytoplasm. It localises to the cytosol. The enzyme catalyses citrate = D-threo-isocitrate. Its function is as follows. Bifunctional iron sensor that switches between 2 activities depending on iron availability. Iron deprivation, promotes its mRNA binding activity through which it regulates the expression of genes involved in iron uptake, sequestration and utilization. Binds to iron-responsive elements (IRES) in the untranslated region of target mRNAs preventing for instance the translation of ferritin and aminolevulinic acid synthase and stabilizing the transferrin receptor mRNA. In terms of biological role, conversely, when cellular iron levels are high, binds a 4Fe-4S cluster which precludes RNA binding activity and promotes the aconitase activity, the isomerization of citrate to isocitrate via cis-aconitate. The protein is Cytoplasmic aconitate hydratase (ACO1) of Homo sapiens (Human).